An 80-amino-acid chain; its full sequence is Small ribosomal subunit protein bS16 (80 aa).

This sequence belongs to the bacterial ribosomal protein bS16 family.

This Hydrogenovibrio crunogenus (strain DSM 25203 / XCL-2) (Thiomicrospira crunogena) protein is Small ribosomal subunit protein bS16.